We begin with the raw amino-acid sequence, 393 residues long: Cysteine protease ATG4B (393 aa).

Met-1 carries the post-translational modification N-acetylmethionine. The residue at position 34 (Ser-34) is a Phosphoserine. Residue Cys-74 is the Nucleophile of the active site. Cys-189 carries the post-translational modification S-nitrosocysteine. Active-site residues include Asp-278 and His-280. Residues Cys-292 and Cys-301 each carry the S-nitrosocysteine modification. The cysteines at positions 292 and 361 are disulfide-linked. Residues Ser-316 and Ser-383 each carry the phosphoserine modification. The LIR signature appears at 388-391 (FEIL). Ser-392 is subject to Phosphoserine.

Belongs to the peptidase C54 family. In terms of assembly, interacts with PFKP; promoting phosphorylation of ATG4B at Ser-34. Interacts with GBP7. Post-translationally, phosphorylation at Ser-383 and Ser-392 promotes autophagy by increasing protein delipidation activity without affecting proteolytic activation of ATG8 proteins. Phosphorylation at Ser-316 by ULK1 inhibits autophagy by decreasing both proteolytic activation and delipidation activities. Phosphorylation at Ser-316 is dephosphorylated by protein phosphatase 2A (PP2A). Phosphorylation at Ser-34 by AKT2 promotes its hydrolase activity, leading to increased proteolytic activation and delipidation of ATG8 family proteins. Phosphorylation at Ser-34 by AKT1 promotes mitochondrial localization and inhibition of the F1F0-ATP synthase activity, leading to elevation of mitochondrial reactive oxygen species (ROS). Ubiquitinated by RNF5, leading to its degradation by the proteasome. In terms of processing, S-nitrosylation at Cys-189 and Cys-292 in response to high glucose decreases both proteolytic activation and delipidation activities. Post-translationally, O-glycosylated by OGT, leading to increase protease activity, thereby promoting the proteolytic activation of ATG8 family proteins. Forms reversible intrachain disulfide bonds in response to oxidative stress. Forms interchain disulfide bonds, leading to formation of homooligomers in response to oxidation.

It is found in the cytoplasm. It localises to the cytosol. The protein resides in the cytoplasmic vesicle. Its subcellular location is the autophagosome. The protein localises to the endoplasmic reticulum. It is found in the mitochondrion. The catalysed reaction is [protein]-C-terminal L-amino acid-glycyl-phosphatidylethanolamide + H2O = [protein]-C-terminal L-amino acid-glycine + a 1,2-diacyl-sn-glycero-3-phosphoethanolamine. It carries out the reaction [protein]-C-terminal L-amino acid-glycyl-phosphatidylserine + H2O = [protein]-C-terminal L-amino acid-glycine + a 1,2-diacyl-sn-glycero-3-phospho-L-serine. Its activity is regulated as follows. Inhibited by N-ethylmaleimide. Redox-regulated during autophagy since reducing conditions activate ATG4A whereas an oxidizing environment such as the presence of H(2)O(2) inhibits its activity. The cysteine protease activity compounds is inhibited by styrylquinoline compounds 4-28 and LV-320. Functionally, cysteine protease that plays a key role in autophagy by mediating both proteolytic activation and delipidation of ATG8 family proteins. Required for canonical autophagy (macroautophagy), non-canonical autophagy as well as for mitophagy. The protease activity is required for proteolytic activation of ATG8 family proteins: cleaves the C-terminal amino acid of ATG8 proteins MAP1LC3A, MAP1LC3B, MAP1LC3C, GABARAPL1, GABARAPL2 and GABARAP, to reveal a C-terminal glycine. Exposure of the glycine at the C-terminus is essential for ATG8 proteins conjugation to phosphatidylethanolamine (PE) and insertion to membranes, which is necessary for autophagy. Protease activity is also required to counteract formation of high-molecular weight conjugates of ATG8 proteins (ATG8ylation): acts as a deubiquitinating-like enzyme that removes ATG8 conjugated to other proteins, such as ATG3. In addition to the protease activity, also mediates delipidation of ATG8 family proteins. Catalyzes delipidation of PE-conjugated forms of ATG8 proteins during macroautophagy. Also involved in non-canonical autophagy, a parallel pathway involving conjugation of ATG8 proteins to single membranes at endolysosomal compartments, by catalyzing delipidation of ATG8 proteins conjugated to phosphatidylserine (PS). Compared to other members of the family (ATG4A, ATG4C or ATG4C), constitutes the major protein for proteolytic activation of ATG8 proteins, while it displays weaker delipidation activity than other ATG4 paralogs. Involved in phagophore growth during mitophagy independently of its protease activity and of ATG8 proteins: acts by regulating ATG9A trafficking to mitochondria and promoting phagophore-endoplasmic reticulum contacts during the lipid transfer phase of mitophagy. The chain is Cysteine protease ATG4B from Mus musculus (Mouse).